The sequence spans 244 residues: LexA repressor (244 aa).

Residues methionine 1–aspartate 24 are disordered. Residues aspartate 10 to aspartate 24 are compositionally biased toward low complexity. Residues isoleucine 58–arginine 78 constitute a DNA-binding region (H-T-H motif). Residues serine 168 and lysine 205 each act as for autocatalytic cleavage activity in the active site.

This sequence belongs to the peptidase S24 family. As to quaternary structure, homodimer.

The enzyme catalyses Hydrolysis of Ala-|-Gly bond in repressor LexA.. Functionally, represses a number of genes involved in the response to DNA damage (SOS response), including recA and lexA. In the presence of single-stranded DNA, RecA interacts with LexA causing an autocatalytic cleavage which disrupts the DNA-binding part of LexA, leading to derepression of the SOS regulon and eventually DNA repair. The chain is LexA repressor from Mycobacterium marinum (strain ATCC BAA-535 / M).